Reading from the N-terminus, the 579-residue chain is Folliculin (579 aa).

Positions 31-82 are disordered; that stretch reads QGAGSGDSPDQVEQAEEEEGGIQMSSRVRAHSPAEGASSESSSPGPKKSDMC. Ser-62 and Ser-73 each carry phosphoserine. A compositionally biased stretch (low complexity) spans 63 to 76; that stretch reads PAEGASSESSSPGP. The region spanning 86–242 is the uDENN FLCN/SMCR8-type domain; that stretch reads RSLAVGHPGY…RNGNAARSLT (157 aa). Residues 287 to 310 adopt a coiled-coil conformation; it reads EKLADLEEESESWDNSEAEEEEKA. Residues 294 to 308 show a composition bias toward acidic residues; it reads EESESWDNSEAEEEE. Residues 294–323 are disordered; sequence EESESWDNSEAEEEEKAPVTPEGAEGRELT. Ser-302, Ser-406, Ser-537, Ser-542, and Ser-571 each carry phosphoserine. Residues 339–491 form the cDENN FLCN/SMCR8-type domain; that stretch reads QPPKLTGFKS…ILNKIEAALT (153 aa). Positions 493 to 558 constitute a dDENN FLCN/SMCR8-type domain; it reads QNLSVDVVDQ…LLKFWMTGLS (66 aa).

It belongs to the folliculin family. As to quaternary structure, interacts (via C-terminus) with FNIP1 or FNIP2 (via C-terminus). Component of the lysosomal folliculin complex (LFC), composed of FLCN, FNIP1 (or FNIP2), RagA/RRAGA or RagB/RRAGB GDP-bound, RagC/RRAGC or RagD/RRAGD GTP-bound, and Ragulator. Interaction with FNIP1 or FNIP2 mediates indirect interaction with the PRKAA1, PRKAB1 and PRKAG1 subunits of 5'-AMP-activated protein kinase (AMPK). Interacts with HSP90AA1 in the presence of FNIP1. Interacts with HSP70, STUB1, CDC37, AHSA1, CCT2, STIP1, PTGES3 and PPP5C. Interacts with GABARAP; interaction takes place in the presence of FNIP1 and/or FNIP2. Interacts with RILP; the interaction is direct and promotes association between RILP and RAB34. Interacts with KIF3A and KIF3B. Interacts with lactate dehydrogenase LDHA, but not LDHB; the interaction is direct, may preferentially bind LDHA dimers rather than tetramers, and regulates LDHA activity, acting as an uncompetitive inhibitor. In terms of processing, phosphorylation by ULK1 modulates the interaction with GABARAP and is required to regulate autophagy. In terms of tissue distribution, highly expressed in adult heart, pancreas, and prostate with moderate expression in adult brain, kidney, liver, adipose tissue and lung.

The protein resides in the lysosome membrane. It localises to the cytoplasm. The protein localises to the cytosol. Its subcellular location is the cell projection. It is found in the cilium. The protein resides in the cytoskeleton. It localises to the microtubule organizing center. The protein localises to the centrosome. Its subcellular location is the spindle. It is found in the nucleus. With respect to regulation, GTPase-activating activity is inhibited in the folliculin complex (LFC), which stabilizes the GDP-bound state of RagA/RRAGA (or RagB/RRAGB), because Arg-164 is located far from the RagC/RRAGC or RagD/RRAGD nucleotide pocket. Disassembly of the LFC complex upon amino acid restimulation liberates the GTPase-activating activity. In terms of biological role, multi-functional protein, involved in both the cellular response to amino acid availability and in the regulation of glycolysis. GTPase-activating protein that plays a key role in the cellular response to amino acid availability through regulation of the non-canonical mTORC1 signaling cascade controlling the MiT/TFE factors TFEB and TFE3. Activates mTORC1 by acting as a GTPase-activating protein: specifically stimulates GTP hydrolysis by RagC/RRAGC or RagD/RRAGD, promoting the conversion to the GDP-bound state of RagC/RRAGC or RagD/RRAGD, and thereby activating the kinase activity of mTORC1. The GTPase-activating activity is inhibited during starvation and activated in presence of nutrients. Acts as a key component for non-canonical mTORC1-dependent control of the MiT/TFE factors TFEB and TFE3, while it is not involved in mTORC1-dependent phosphorylation of canonical RPS6KB1/S6K1 and EIF4EBP1/4E-BP1. In low-amino acid conditions, the lysosomal folliculin complex (LFC) is formed on the membrane of lysosomes, which inhibits the GTPase-activating activity of FLCN, inactivates mTORC1 and maximizes nuclear translocation of TFEB and TFE3. Upon amino acid restimulation, RagA/RRAGA (or RagB/RRAGB) nucleotide exchange promotes disassembly of the LFC complex and liberates the GTPase-activating activity of FLCN, leading to activation of mTORC1 and subsequent cytoplasmic retention of TFEB and TFE3. Indirectly acts as a positive regulator of Wnt signaling by promoting mTOR-dependent cytoplasmic retention of MiT/TFE factor TFE3. Required for the exit of hematopoietic stem cell from pluripotency by promoting mTOR-dependent cytoplasmic retention of TFE3, thereby increasing Wnt signaling. Involved in the control of embryonic stem cells differentiation; together with LAMTOR1 it is necessary to recruit and activate RagC/RRAGC and RagD/RRAGD at the lysosomes, and to induce exit of embryonic stem cells from pluripotency via non-canonical, mTOR-independent TFE3 inactivation. Acts as an inhibitor of browning of adipose tissue by regulating mTOR-dependent cytoplasmic retention of TFE3. In response to flow stress, regulates STK11/LKB1 accumulation and mTORC1 activation through primary cilia: may act by recruiting STK11/LKB1 to primary cilia for activation of AMPK resided at basal bodies, causing mTORC1 down-regulation. Together with FNIP1 and/or FNIP2, regulates autophagy: following phosphorylation by ULK1, interacts with GABARAP and promotes autophagy. Required for starvation-induced perinuclear clustering of lysosomes by promoting association of RILP with its effector RAB34. Regulates glycolysis by binding to lactate dehydrogenase LDHA, acting as an uncompetitive inhibitor. This is Folliculin from Mus musculus (Mouse).